The following is a 1534-amino-acid chain: Slit homolog 1 protein (1534 aa).

The N-terminal stretch at 1–33 is a signal peptide; that stretch reads MALTPGWGSSAGPVRPELWLLLWAAAWRLGASA. In terms of domain architecture, LRRNT spans 34–61; sequence CPALCTCTGTTVDCHGTGLQAIPKNIPR. 6 LRR repeats span residues 62–83, 86–107, 110–131, 134–155, 158–179, and 182–203; these read NTER…DFAG, QLRV…AFDD, ELER…LFQN, ALSR…AFRG, DLKN…AFRA, and GLEV…SFNH. Asn72 carries N-linked (GlcNAc...) asparagine glycosylation. The N-linked (GlcNAc...) asparagine glycan is linked to Asn192. In terms of domain architecture, LRRCT 1 spans 215-265; that stretch reads NHLFCDCHLAWLSQWLRQRPTIGLFTQCSGPASLRGLNVAEVQKSEFSCSG. Residues 273-309 form the LRRNT 2 domain; sequence PTCTLSSGSCPAMCTCSNGIVDCRGKGLTAIPANLPE. Cys286 and Cys295 form a disulfide bridge. LRR repeat units lie at residues 310 to 331, 334 to 355, 358 to 379, 382 to 403, and 406 to 427; these read TMTE…AFSP, KLRR…AFQG, SLNS…VFGG, TLQL…AFQD, and NLSL…TFTS. N-linked (GlcNAc...) asparagine glycosylation occurs at Asn406. The LRRCT 2 domain occupies 439–489; that stretch reads NPFICDCNLKWLADFLRTNPIETSGARCASPRRLANKRIGQIKSKKFRCSA. 4 disulfides stabilise this stretch: Cys443-Cys466, Cys445-Cys487, Cys513-Cys519, and Cys517-Cys526. The 37-residue stretch at 504 to 540 folds into the LRRNT 3 domain; the sequence is NSECNSDVVCPHKCRCEANVVECSSLKLTKIPERIPQ. LRR repeat units follow at residues 541–562, 566–587, 590–611, 614–635, and 638–659; these read STAE…GMFK, HLKK…AFEG, SVSE…MFRG, GLRT…SFTG, and NVRL…AFDT. A glycan (N-linked (GlcNAc...) asparagine) is linked at Asn571. An N-linked (GlcNAc...) asparagine glycan is attached at Asn630. One can recognise an LRRCT 3 domain in the interval 671–721; that stretch reads NPFNCNCQLAWLGGWLRKRKIVTGNPRCQNPDFLRQIPLQDVAFPDFRCEE. 2 disulfides stabilise this stretch: Cys675–Cys698 and Cys677–Cys719. The LRRNT 4 domain maps to 725-761; it reads EGGCLPRPQCPQECACLDTVVRCSNKHLRALPKGIPK. N-linked (GlcNAc...) asparagine glycosylation is found at Asn762, Asn801, and Asn806. 4 LRR repeats span residues 762–783, 785–806, 809–830, and 833–854; these read NVTE…LSTF, YLQL…SFTN, QLTT…AFQG, and SLRL…IFAD. The LRRCT 4 domain occupies 866-916; sequence NPLYCDCHLRWLSSWVKTGYKEPGIARCAGPQDMEGKLLLTTPAKKFECQG. 6 consecutive EGF-like domains span residues 927–962, 964–1003, 1005–1041, 1043–1081, 1083–1119, and 1127–1163; these read DLCL…RDCE, SLDS…PTCG, NTDD…KACE, LVDL…DNCS, NQDD…QLCE, and PKSP…PECE. 18 disulfides stabilise this stretch: Cys929–Cys940, Cys934–Cys950, Cys952–Cys961, Cys968–Cys979, Cys973–Cys991, Cys993–Cys1002, Cys1009–Cys1020, Cys1014–Cys1029, Cys1031–Cys1040, Cys1047–Cys1060, Cys1054–Cys1069, Cys1071–Cys1080, Cys1087–Cys1098, Cys1092–Cys1107, Cys1109–Cys1118, Cys1131–Cys1142, Cys1136–Cys1151, and Cys1153–Cys1162. An N-linked (GlcNAc...) asparagine glycan is attached at Asn1026. Asn1079 is a glycosylation site (N-linked (GlcNAc...) asparagine). The 174-residue stretch at 1166 to 1339 folds into the Laminin G-like domain; that stretch reads LSVNFVDRDT…QMKPGVVPGC (174 aa). Residues Asn1189, Asn1259, and Asn1306 are each glycosylated (N-linked (GlcNAc...) asparagine). 14 cysteine pairs are disulfide-bonded: Cys1313/Cys1339, Cys1342/Cys1352, Cys1347/Cys1362, Cys1364/Cys1373, Cys1381/Cys1391, Cys1386/Cys1401, Cys1403/Cys1412, Cys1422/Cys1432, Cys1427/Cys1442, Cys1444/Cys1453, Cys1459/Cys1498, Cys1477/Cys1512, Cys1488/Cys1528, and Cys1492/Cys1530. 3 EGF-like domains span residues 1340–1374, 1377–1413, and 1418–1454; these read EPCR…LHCD, ADGP…ALCN, and LAEP…ELCE. Residues 1459–1534 enclose the CTCK domain; it reads CRGDPVRDFH…PTKCGCALCA (76 aa).

Interacts with ROBO1 and GREM1. As to expression, predominantly expressed in adult forebrain. Expressed in fetal brain, lung and kidney.

The protein resides in the secreted. Thought to act as molecular guidance cue in cellular migration, and function appears to be mediated by interaction with roundabout homolog receptors. During neural development involved in axonal navigation at the ventral midline of the neural tube and projection of axons to different regions. SLIT1 and SLIT2 together seem to be essential for midline guidance in the forebrain by acting as repulsive signal preventing inappropriate midline crossing by axons projecting from the olfactory bulb. The polypeptide is Slit homolog 1 protein (SLIT1) (Homo sapiens (Human)).